The following is a 267-amino-acid chain: UPF0328 protein ECU06_0070 (267 aa).

Belongs to the UPF0328 family.

This chain is UPF0328 protein ECU06_0070, found in Encephalitozoon cuniculi (strain GB-M1) (Microsporidian parasite).